The primary structure comprises 29 residues: ATP synthase subunit 9, mitochondrial (29 aa).

The protein belongs to the ATPase C chain family. In terms of assembly, F-type ATPases have 2 components, CF(1) - the catalytic core - and CF(0) - the membrane proton channel. CF(1) has five subunits: alpha(3), beta(3), gamma(1), delta(1), epsilon(1). CF(0) has three main subunits: a, b and c.

It localises to the mitochondrion membrane. Mitochondrial membrane ATP synthase (F(1)F(0) ATP synthase or Complex V) produces ATP from ADP in the presence of a proton gradient across the membrane which is generated by electron transport complexes of the respiratory chain. F-type ATPases consist of two structural domains, F(1) - containing the extramembraneous catalytic core and F(0) - containing the membrane proton channel, linked together by a central stalk and a peripheral stalk. During catalysis, ATP synthesis in the catalytic domain of F(1) is coupled via a rotary mechanism of the central stalk subunits to proton translocation. Part of the complex F(0) domain. A homomeric c-ring of probably 10 subunits is part of the complex rotary element. In Wickerhamomyces pijperi (Yeast), this protein is ATP synthase subunit 9, mitochondrial (ATP9).